We begin with the raw amino-acid sequence, 285 residues long: Dermonecrotic toxin LlSicTox-alphaIII1ii (285 aa).

Histidine 12 is a catalytic residue. Residues glutamate 32 and aspartate 34 each contribute to the Mg(2+) site. The active-site Nucleophile is the histidine 47. A disulfide bridge links cysteine 51 with cysteine 57. Aspartate 91 contacts Mg(2+).

Belongs to the arthropod phospholipase D family. Class I subfamily. It depends on Mg(2+) as a cofactor. As to expression, expressed by the venom gland.

Its subcellular location is the secreted. The enzyme catalyses an N-(acyl)-sphingosylphosphocholine = an N-(acyl)-sphingosyl-1,3-cyclic phosphate + choline. The catalysed reaction is an N-(acyl)-sphingosylphosphoethanolamine = an N-(acyl)-sphingosyl-1,3-cyclic phosphate + ethanolamine. It catalyses the reaction a 1-acyl-sn-glycero-3-phosphocholine = a 1-acyl-sn-glycero-2,3-cyclic phosphate + choline. It carries out the reaction a 1-acyl-sn-glycero-3-phosphoethanolamine = a 1-acyl-sn-glycero-2,3-cyclic phosphate + ethanolamine. Its function is as follows. Dermonecrotic toxins cleave the phosphodiester linkage between the phosphate and headgroup of certain phospholipids (sphingolipid and lysolipid substrates), forming an alcohol (often choline) and a cyclic phosphate. This toxin acts on sphingomyelin (SM) with high activity (56.8 U/mg). It may also act on ceramide phosphoethanolamine (CPE), lysophosphatidylcholine (LPC) and lysophosphatidylethanolamine (LPE), but not on lysophosphatidylserine (LPS), and lysophosphatidylglycerol (LPG). It acts by transphosphatidylation, releasing exclusively cyclic phosphate products as second products. Induces dermonecrosis, hemolysis, increased vascular permeability, edema, inflammatory response, and platelet aggregation. Is lethal to mice. This chain is Dermonecrotic toxin LlSicTox-alphaIII1ii, found in Loxosceles laeta (South American recluse spider).